The sequence spans 177 residues: Calcineurin subunit B (177 aa).

EF-hand domains lie at 25-60, 62-92, 94-129, and 135-170; these read KEIK…AVNP, VKRV…FNAQ, DKQR…MVGN, and QLQQ…QDLE. Positions 38, 40, 42, 44, 49, 70, 72, 74, 76, 81, 107, 109, 111, 113, 118, 148, 150, 152, 154, and 159 each coordinate Ca(2+).

The protein belongs to the calcineurin regulatory subunit family. Composed of a catalytic subunit (A) and a regulatory subunit (B).

In terms of biological role, regulatory subunit of calcineurin, a calcium-dependent, calmodulin stimulated protein phosphatase. Confers calcium sensitivity. The polypeptide is Calcineurin subunit B (CNB1) (Naegleria gruberi (Amoeba)).